Here is a 339-residue protein sequence, read N- to C-terminus: Protein LicA (339 aa).

Tandem repeats lie at residues 4–7, 8–11, 12–15, 16–19, 20–23, 24–27, 28–31, 32–35, and 36–39. A 9 X 4 AA tandem repeats of I-N-Q-S region spans residues 4–39; sequence INQSINQSINQSINQSINQSINQSINQSINQSINQS.

This sequence belongs to the peptidase S49 family.

In terms of biological role, mediates phase variation of the LOS 6A2 and 12D9 epitopes. Phase variation of H.influenza LOS epitopes expressed by LicA is determined by a translational switch. The protein is Protein LicA (licA) of Haemophilus influenzae.